We begin with the raw amino-acid sequence, 350 residues long: Small-conductance mechanosensitive channel MscMJ (350 aa).

5 consecutive transmembrane segments (helical) span residues 10-30 (ISNI…GKIV), 59-79 (LPII…FLIL), 91-111 (VKVV…DGIF), 130-150 (IIKP…ILTA), and 154-174 (VGYD…ALAL).

It belongs to the MscS (TC 1.A.23) family.

It localises to the cell membrane. Its function is as follows. Small-conductance mechanosensitive channel that opens in response to stretch forces in the membrane lipid bilayer. Exhibits a sixfold preference for cations over anions. Non-rectifying. The chain is Small-conductance mechanosensitive channel MscMJ from Methanocaldococcus jannaschii (strain ATCC 43067 / DSM 2661 / JAL-1 / JCM 10045 / NBRC 100440) (Methanococcus jannaschii).